We begin with the raw amino-acid sequence, 133 residues long: ATP synthase epsilon chain, chloroplastic (133 aa).

Belongs to the ATPase epsilon chain family. As to quaternary structure, F-type ATPases have 2 components, CF(1) - the catalytic core - and CF(0) - the membrane proton channel. CF(1) has five subunits: alpha(3), beta(3), gamma(1), delta(1), epsilon(1). CF(0) has three main subunits: a, b and c.

The protein localises to the plastid. It localises to the chloroplast thylakoid membrane. Its function is as follows. Produces ATP from ADP in the presence of a proton gradient across the membrane. This is ATP synthase epsilon chain, chloroplastic from Gossypium barbadense (Sea Island cotton).